A 786-amino-acid chain; its full sequence is MSKRGSLQDRASPSEETVKKAQKRRKPIKSCAFCRKRKLRCDQQKPMCSTCKTRGRSGCLYTEKFTHKIETKELFGSTPNIELLKRIEDLEKRLDDKELTEKDVALSTSPFRNPYANFYYLQCKGSGRRIVYGPTSLRTHLSNDDNRFVNTYNQLWSKVKIERNRWKARHKWTMKPETQLLEGPPLEKTGSDILQQVCNVLPSFEQSSKIITDFFNTELETNEVSEVLDKTKIINDFTSSFLPSDELLPNGERRIEKLLPSTKKNYYKIGVILMILCIRHFYKNTPEEIEKFLIMLTGLSTAKVYFIERAQFLLLKYYHRELIWACGDDSHMISLVDLLCSTAIMLGLHLNIREIYKNQENIVGSMESLENLWVWIILSDFNVSLNIGRCLAINSSYFQVDECENGERLPKNTNNYSSTVFFDQSNSCMGKLKRFLRLARPMLDQIYDRSAFPDLAENCKKLRNFVETEFHPISYYTDSELISKVPLCEIKVLAQVLNLLLTFYSLRYLIYKEKSVVLENNILQTILVSFSLVINTTILCFNLDEKHFPEFFDHNCVHLPPFMALSLVYTNFLFPRASTGFCAFLYHKLTLFEKGYYLSSNIKDQEVTDWDLSTLNIPLDKAMNLLTAFKIHSDIFAKWSNDNNKQLRIIMARSYTFVINIALESIYRAVLEKVIKYRTEVENTWLQQLQDELNGSYSLTDNVNTPIDPSLSDLGVTSASPLAGNSPGLPPEEVRNNSENASHNNETGPIETELAQTISNEFWTAYNLGWEELMSQPDYKYLFDTQ.

Residues 1–25 (MSKRGSLQDRASPSEETVKKAQKRR) are disordered. A DNA-binding region (zn(2)-C6 fungal-type) is located at residues 31-59 (CAFCRKRKLRCDQQKPMCSTCKTRGRSGC). The disordered stretch occupies residues 721 to 747 (PLAGNSPGLPPEEVRNNSENASHNNET). A compositionally biased stretch (polar residues) spans 737-747 (NSENASHNNET).

The protein resides in the cytoplasm. It is found in the nucleus. In terms of biological role, transcription factor involved in the regulation of multidrug resistance genes. Acts in concert with YRR1. The chain is Zinc finger transcription factor YRM1 (YRM1) from Saccharomyces cerevisiae (strain ATCC 204508 / S288c) (Baker's yeast).